The following is a 381-amino-acid chain: L-lactate dehydrogenase (381 aa).

Residues 1-380 (MIISASTDYR…TRDSLVRELG (380 aa)) enclose the FMN hydroxy acid dehydrogenase domain. Tyr-24 contributes to the substrate binding site. The FMN site is built by Ser-106 and Gln-127. Tyr-129 contributes to the substrate binding site. Residue Thr-155 coordinates FMN. Residue Arg-164 participates in substrate binding. An FMN-binding site is contributed by Lys-251. His-275 acts as the Proton acceptor in catalysis. Arg-278 provides a ligand contact to substrate. 306–330 (DSGIRSGLDVVRMIALGADTVLIGR) is a binding site for FMN.

Belongs to the FMN-dependent alpha-hydroxy acid dehydrogenase family. Homotetramer. FMN is required as a cofactor.

Its subcellular location is the cell inner membrane. It carries out the reaction (S)-lactate + A = pyruvate + AH2. Catalyzes the conversion of L-lactate to pyruvate. Is coupled to the respiratory chain. This is L-lactate dehydrogenase from Pseudomonas entomophila (strain L48).